The primary structure comprises 559 residues: uncharacterized protein (559 aa).

Helical transmembrane passes span 103–123, 139–159, 192–212, 223–243, 263–283, 302–322, 348–368, 387–407, 413–434, 466–486, and 501–521; these read LAALIAGNVFIAMPMTLNGLF, FGYYFNTLIILLRFIAGLFYY, AGITSDFLISYFVYWVISFPF, FFLIKSISTYIACFAMLIFLL, WSWVFMCALNSSVAGFSTLAV, MLILPLVAAVSAPIGIVSGVA, AAAFFMGLTYLVSMIAQNISD, IRRAQVIVIIIGAWAIVPWKI, AFLAFLGSLSIFLGPAAGIFVA, ALIAFLCACVPLIPGMAMSIN, and IGYFYSFMTAFLIYWGLNLVF.

It belongs to the purine-cytosine permease (2.A.39) family.

It is found in the golgi apparatus membrane. This is an uncharacterized protein from Schizosaccharomyces pombe (strain 972 / ATCC 24843) (Fission yeast).